Here is a 339-residue protein sequence, read N- to C-terminus: Lipoate-protein ligase A (339 aa).

A BPL/LPL catalytic domain is found at 29-216 (DPSQQVLFLW…SFENFYAGKA (188 aa)). ATP contacts are provided by residues Arg-71, 76–79 (GAVF), and Lys-134. Lys-134 serves as a coordination point for (R)-lipoate.

The protein belongs to the LplA family. Monomer.

It localises to the cytoplasm. The catalysed reaction is L-lysyl-[lipoyl-carrier protein] + (R)-lipoate + ATP = N(6)-[(R)-lipoyl]-L-lysyl-[lipoyl-carrier protein] + AMP + diphosphate + H(+). It functions in the pathway protein modification; protein lipoylation via exogenous pathway; protein N(6)-(lipoyl)lysine from lipoate: step 1/2. The protein operates within protein modification; protein lipoylation via exogenous pathway; protein N(6)-(lipoyl)lysine from lipoate: step 2/2. Its function is as follows. Catalyzes both the ATP-dependent activation of exogenously supplied lipoate to lipoyl-AMP and the transfer of the activated lipoyl onto the lipoyl domains of lipoate-dependent enzymes. The protein is Lipoate-protein ligase A of Bdellovibrio bacteriovorus (strain ATCC 15356 / DSM 50701 / NCIMB 9529 / HD100).